A 132-amino-acid polypeptide reads, in one-letter code: Interleukin-13 (132 aa).

An N-terminal signal peptide occupies residues 1–18 (MALLLTTVIALTCLGGFA). 4 N-linked (GlcNAc...) asparagine glycosylation sites follow: Asn38, Asn49, Asn57, and Asn72. Intrachain disulfides connect Cys48/Cys76 and Cys64/Cys90.

Belongs to the IL-4/IL-13 family. As to quaternary structure, interacts with IL13RA2.

It localises to the secreted. Its function is as follows. Cytokine that plays important roles in allergic inflammation and immune response to parasite infection. Synergizes with IL2 in regulating interferon-gamma synthesis. Stimulates B-cell proliferation, and activation of eosinophils, basophils, and mast cells. Plays an important role in controlling IL33 activity by modulating the production of transmembrane and soluble forms of interleukin-1 receptor-like 1/IL1RL1. Displays the capacity to antagonize Th1-driven proinflammatory immune response and downregulates synthesis of many proinflammatory cytokines including IL1, IL6, IL10, IL12 and TNF-alpha through a mechanism that partially involves suppression of NF-kappa-B. Also functions on nonhematopoietic cells, including endothelial cells where it induces vascular cell adhesion protein 1/VCAM1, which is important in the recruitment of eosinophils. Exerts its biological effects through its receptors which comprises the IL4R chain and the IL13RA1 chain, to activate JAK1 and TYK2, leading to the activation of STAT6. Aside from IL13RA1, another receptor IL13RA2 acts as a high affinity decoy for IL13 and mediates internalization and depletion of extracellular IL13. The chain is Interleukin-13 (IL13) from Pan troglodytes (Chimpanzee).